Consider the following 107-residue polypeptide: Nucleoid-associated protein YaaK (107 aa).

The disordered stretch occupies residues 1-24 (MRGGMGNMQKMMKQMQKMQKDMAK). Low complexity predominate over residues 8 to 17 (MQKMMKQMQK).

The protein belongs to the YbaB/EbfC family. As to quaternary structure, homodimer.

The protein resides in the cytoplasm. It is found in the nucleoid. Binds to DNA and alters its conformation. May be involved in regulation of gene expression, nucleoid organization and DNA protection. The chain is Nucleoid-associated protein YaaK (yaaK) from Bacillus subtilis (strain 168).